A 206-amino-acid polypeptide reads, in one-letter code: FMN-dependent NADH:quinone oxidoreductase (206 aa).

Residues S10, 16–18 (SSS), 93–96 (MYNF), and 137–140 (TRGG) contribute to the FMN site.

This sequence belongs to the azoreductase type 1 family. Homodimer. FMN serves as cofactor.

The enzyme catalyses 2 a quinone + NADH + H(+) = 2 a 1,4-benzosemiquinone + NAD(+). It carries out the reaction N,N-dimethyl-1,4-phenylenediamine + anthranilate + 2 NAD(+) = 2-(4-dimethylaminophenyl)diazenylbenzoate + 2 NADH + 2 H(+). In terms of biological role, quinone reductase that provides resistance to thiol-specific stress caused by electrophilic quinones. Also exhibits azoreductase activity. Catalyzes the reductive cleavage of the azo bond in aromatic azo compounds to the corresponding amines. This chain is FMN-dependent NADH:quinone oxidoreductase, found in Psychromonas ingrahamii (strain DSM 17664 / CCUG 51855 / 37).